The sequence spans 145 residues: D-aminoacyl-tRNA deacylase (145 aa).

Residues 137-138 carry the Gly-cisPro motif, important for rejection of L-amino acids motif; it reads GP.

This sequence belongs to the DTD family. Homodimer.

It localises to the cytoplasm. The enzyme catalyses glycyl-tRNA(Ala) + H2O = tRNA(Ala) + glycine + H(+). It carries out the reaction a D-aminoacyl-tRNA + H2O = a tRNA + a D-alpha-amino acid + H(+). In terms of biological role, an aminoacyl-tRNA editing enzyme that deacylates mischarged D-aminoacyl-tRNAs. Also deacylates mischarged glycyl-tRNA(Ala), protecting cells against glycine mischarging by AlaRS. Acts via tRNA-based rather than protein-based catalysis; rejects L-amino acids rather than detecting D-amino acids in the active site. By recycling D-aminoacyl-tRNA to D-amino acids and free tRNA molecules, this enzyme counteracts the toxicity associated with the formation of D-aminoacyl-tRNA entities in vivo and helps enforce protein L-homochirality. This is D-aminoacyl-tRNA deacylase from Francisella tularensis subsp. holarctica (strain LVS).